The chain runs to 348 residues: Galanin receptor type 1 (348 aa).

Residues 1–34 (MELAMVNLSEGNGSDPEPPAPESRPLFGIGVENF) are Extracellular-facing. Asn7 and Asn12 each carry an N-linked (GlcNAc...) asparagine glycan. The helical transmembrane segment at 35 to 55 (ITLVVFGLIFAMGVLGNSLVI) threads the bilayer. Residues 56-70 (TVLARSKPGKPRSTT) lie on the Cytoplasmic side of the membrane. The chain crosses the membrane as a helical span at residues 71-91 (NLFILNLSIADLAYLLFCIPF). Residues 92–109 (QATVYALPTWVLGAFICK) lie on the Extracellular side of the membrane. A disulfide bridge links Cys108 with Cys186. A helical transmembrane segment spans residues 110-131 (FIHYFFTVSMLVSIFTLAAMSV). Over 132-151 (DRYVAIVHSRRSSSLRVSRN) the chain is Cytoplasmic. Residues 152–172 (ALLGVGFIWALSIAMASPVAY) traverse the membrane as a helical segment. Residues 173 to 197 (HQRLFHRDSNQTFCWEQWPNKLHKK) lie on the Extracellular side of the membrane. N-linked (GlcNAc...) asparagine glycosylation is present at Asn182. A helical membrane pass occupies residues 198–218 (AYVVCTFVFGYLLPLLLICFC). Over 219-247 (YAKVLNHLHKKLKNMSKKSEASKKKTAQT) the chain is Cytoplasmic. A helical membrane pass occupies residues 248-268 (VLVVVVVFGISWLPHHVVHLW). Topologically, residues 269–270 (AE) are extracellular. Residues 271–291 (FGAFPLTPASFFFRITAHCLA) form a helical membrane-spanning segment. At 292–348 (YSNSSVNPIIYAFLSENFRKAYKQVFKCHVCDESPRSETKENKSRMDTPPSTNCTHV) the chain is on the cytoplasmic side. Cys319 carries the S-palmitoyl cysteine lipid modification. Positions 328-337 (SETKENKSRM) are enriched in basic and acidic residues. The tract at residues 328-348 (SETKENKSRMDTPPSTNCTHV) is disordered.

This sequence belongs to the G-protein coupled receptor 1 family. In terms of assembly, interacts with GRP39 AND HTR1A. Post-translationally, three cysteine residues are found in the C-terminus, at least one of which may be palmitoylated. Expression is detected in brain, spinal cord, heart and skeletal muscle.

The protein localises to the cell membrane. Functionally, receptor for the hormone galanin. The activity of this receptor is mediated by G proteins that inhibit adenylate cyclase activity. The polypeptide is Galanin receptor type 1 (Galr1) (Mus musculus (Mouse)).